A 322-amino-acid polypeptide reads, in one-letter code: UDP-galactose transporter homolog 1 (322 aa).

Helical transmembrane passes span 4-24, 43-63, 76-96, 105-125, and 129-149; these read FMRQ…SWAV, ALLS…WNWF, FLGY…FGYA, TVIL…VFVY, and FPPH…IFSY. N-linked (GlcNAc...) asparagine glycosylation occurs at Asn-152. The next 4 helical transmembrane spans lie at 164 to 184, 199 to 219, 250 to 270, and 290 to 310; these read SPIG…TNTT, MMIA…ISPF, LFIF…ITLT, and IQWL…GLKI. Asn-313 and Asn-314 each carry an N-linked (GlcNAc...) asparagine glycan.

It belongs to the nucleotide-sugar transporter family. SLC35B subfamily.

The protein localises to the endoplasmic reticulum membrane. Its function is as follows. May be involved in specific transport of UDP-Gal from the cytosol to the Golgi lumen. Involved in the maintenance of optimal conditions for the folding of secretory pathway proteins in the endoplasmic reticulum. The chain is UDP-galactose transporter homolog 1 (hut1) from Schizosaccharomyces pombe (strain 972 / ATCC 24843) (Fission yeast).